A 566-amino-acid chain; its full sequence is Chaperone ric-8 (566 aa).

Belongs to the synembryn family. Interacts with GDP-bound G-alpha proteins goa-1 and gpa-16. Does not interact with G-alpha proteins when they are in complex with subunits beta and gamma. In terms of tissue distribution, present throughout the nervous system in juveniles and adults (at protein level).

It localises to the cytoplasm. The protein localises to the cell cortex. Chaperone that specifically binds and folds some, but not all, nascent G alpha proteins prior to G protein heterotrimer formation, promoting their stability and activity. Also acts as a guanine nucleotide exchange factor (GEF) for G alpha proteins by stimulating exchange of bound GDP for free GTP. Able to facilitate synaptic transmission in the nervous system probably by activating G(q)-alpha (egl-30). Also able to activate the G(s)-alpha in synaptic signaling network. Plays a key role in asymmetric spindle positioning, a step for asymmetric cell division that generates cell diversity during development by activating G(i)-alpha protein goa-1 and gpa-16 independently of G-protein coupled receptors. While it acts as a GEF for goa-1, it has no GEF activity toward gpa-16. In addition to its GEF activity, it is required for cortical subcellular localization of G-alpha proteins such as gpa-16. Also required for the interaction of goa-1 and gpr-1/2, suggesting that it may act by generating G-alpha proteins free from G-beta-gamma subunits, enabling gpr-1/2 to mediate asymmetric cell division. The polypeptide is Chaperone ric-8 (ric-8) (Caenorhabditis elegans).